Consider the following 545-residue polypeptide: CTP synthase (545 aa).

The interval 1–266 (MTTRYIFVTG…DDLVTKRFGL (266 aa)) is amidoligase domain. Residue S14 coordinates CTP. S14 contacts UTP. ATP-binding positions include 15–20 (SLGKGI) and D72. Residues D72 and E140 each coordinate Mg(2+). CTP contacts are provided by residues 147-149 (DIE), 187-192 (KTKPTQ), and K223. UTP is bound by residues 187–192 (KTKPTQ) and K223. ATP is bound at residue 239-241 (KDV). Positions 291–542 (TIGMVGKYTE…VAAAVAYQKR (252 aa)) constitute a Glutamine amidotransferase type-1 domain. Residue G352 participates in L-glutamine binding. C379 (nucleophile; for glutamine hydrolysis) is an active-site residue. Residues 380–383 (LGMQ), E403, and R470 each bind L-glutamine. Active-site residues include H515 and E517.

Belongs to the CTP synthase family. As to quaternary structure, homotetramer.

It carries out the reaction UTP + L-glutamine + ATP + H2O = CTP + L-glutamate + ADP + phosphate + 2 H(+). The catalysed reaction is L-glutamine + H2O = L-glutamate + NH4(+). The enzyme catalyses UTP + NH4(+) + ATP = CTP + ADP + phosphate + 2 H(+). It functions in the pathway pyrimidine metabolism; CTP biosynthesis via de novo pathway; CTP from UDP: step 2/2. Allosterically activated by GTP, when glutamine is the substrate; GTP has no effect on the reaction when ammonia is the substrate. The allosteric effector GTP functions by stabilizing the protein conformation that binds the tetrahedral intermediate(s) formed during glutamine hydrolysis. Inhibited by the product CTP, via allosteric rather than competitive inhibition. Catalyzes the ATP-dependent amination of UTP to CTP with either L-glutamine or ammonia as the source of nitrogen. Regulates intracellular CTP levels through interactions with the four ribonucleotide triphosphates. In Shewanella loihica (strain ATCC BAA-1088 / PV-4), this protein is CTP synthase.